Consider the following 177-residue polypeptide: Large ribosomal subunit protein uL6 (177 aa).

Belongs to the universal ribosomal protein uL6 family. As to quaternary structure, part of the 50S ribosomal subunit.

In terms of biological role, this protein binds to the 23S rRNA, and is important in its secondary structure. It is located near the subunit interface in the base of the L7/L12 stalk, and near the tRNA binding site of the peptidyltransferase center. The sequence is that of Large ribosomal subunit protein uL6 from Histophilus somni (strain 2336) (Haemophilus somnus).